We begin with the raw amino-acid sequence, 638 residues long: NBPF family member NBPF4 (638 aa).

Coiled-coil stretches lie at residues 10 to 43 (SERA…EKFL) and 69 to 115 (DSVL…KLRE). The tract at residues 157–285 (HLVHKLSPEN…VPPRHHDKSN (129 aa)) is disordered. Residues 165–179 (ENDEDEDEDEDDKDE) show a composition bias toward acidic residues. Residues 174–261 (EDDKDEEVEK…EEEEALNIPP (88 aa)) enclose the Olduvai 1 domain. Basic and acidic residues predominate over residues 192–202 (EVQKTEEKEVP). Positions 214–226 (SNSHNPSNSNQPH) are enriched in low complexity. Basic and acidic residues-rich tracts occupy residues 232–251 (TFKE…HPHD) and 264–273 (QNDHEEEEGK). 2 Olduvai domains span residues 326 to 399 (EKQS…ALVD) and 400 to 503 (KIKK…SQAQ). Residues 562–584 (GMKNPPQLEDDALEGSASNTQGR) are disordered.

It belongs to the NBPF family. As to expression, expressed in testis.

The protein localises to the cytoplasm. The chain is NBPF family member NBPF4 from Homo sapiens (Human).